We begin with the raw amino-acid sequence, 325 residues long: Putative HTH-type transcriptional regulatory protein HQ_3058A (325 aa).

An HTH cro/C1-type domain is found at 132–186; the sequence is LADEREERGWSLGRLATELGVSRRTVSKYEDGMNASIEIAIQLEEVFDEPFSSPL. Positions 143–162 form a DNA-binding region, H-T-H motif; it reads LGRLATELGVSRRTVSKYED. The disordered stretch occupies residues 189 to 211; that stretch reads MEGAESVRDSEPTPDDPDPDADD. Positions 200-211 are enriched in acidic residues; sequence PTPDDPDPDADD.

This chain is Putative HTH-type transcriptional regulatory protein HQ_3058A, found in Haloquadratum walsbyi (strain DSM 16790 / HBSQ001).